The sequence spans 432 residues: MGRIGTPVFLAFLSALTCSLQVHAQVRDLKQCSNDPEFGRYCPTTCGVADVLSKYAKGVDEDSSFIDSVLTQLAAKHGIVEGNVNIVNEDVRITRDEAQIIKDSGQKTVQKILEEVRILEQIGVSHDAQIQELSEMWRVNQQFVTRLQQQLVDIRQTCSRSCQDTTANKISPITGKDCQQVVDNGGKDSGLYYIKPLKAKQPFLVFCEIENGNGWTVIQHRHDGSVNFTRDWVSYREGFGYLAPTLTTEFWLGNEKIHLLTGQQAYRLRIDLTDWENTHRYADYGHFKLTPESDEYRLFYSMYLDGDAGNAFDGFDFGDDPQDKFYTTHLGMLFSTPERDNDKYEGSCAEQDGSGWWMNRCHAGHLNGKYYFGGNYRKTDVEFPYDDGIIWATWHDRWYSLKMTTMKLLPMGRDLSGHGGQQQSKGNSRGDN.

The N-terminal stretch at 1-24 (MGRIGTPVFLAFLSALTCSLQVHA) is a signal peptide. The Fibrinogen C-terminal domain occupies 169–412 (KISPITGKDC…MTTMKLLPMG (244 aa)). Cysteines 178 and 207 form a disulfide. N-linked (GlcNAc...) asparagine glycosylation occurs at Asn227. Positions 340, 342, 344, and 346 each coordinate Ca(2+). The cysteines at positions 348 and 361 are disulfide-linked. The tract at residues 413–432 (RDLSGHGGQQQSKGNSRGDN) is disordered. Polar residues predominate over residues 421–432 (QQQSKGNSRGDN).

As to quaternary structure, heterohexamer; disulfide linked. Contains 2 sets of 3 non-identical chains (alpha, beta and gamma). The 2 heterotrimers are in head to head conformation with the N-termini in a small central domain. Post-translationally, conversion of fibrinogen to fibrin is triggered by thrombin, which cleaves fibrinopeptides A and B from alpha and beta chains, and thus exposes the N-terminal polymerization sites responsible for the formation of the soft clot. The soft clot is converted into the hard clot by factor XIIIA which catalyzes the epsilon-(gamma-glutamyl)lysine cross-linking between gamma chains (stronger) and between alpha chains (weaker) of different monomers.

It is found in the secreted. Functionally, together with fibrinogen alpha (FGA) and fibrinogen beta (FGB), polymerizes to form an insoluble fibrin matrix. Has a major function in hemostasis as one of the primary components of blood clots. The polypeptide is Fibrinogen gamma chain (FGG) (Petromyzon marinus (Sea lamprey)).